Here is a 300-residue protein sequence, read N- to C-terminus: Ribosomal RNA small subunit methyltransferase H (300 aa).

S-adenosyl-L-methionine-binding positions include 33–35, Asp-52, Phe-86, Asp-97, and Gln-104; that span reads AGH.

It belongs to the methyltransferase superfamily. RsmH family.

The protein localises to the cytoplasm. The enzyme catalyses cytidine(1402) in 16S rRNA + S-adenosyl-L-methionine = N(4)-methylcytidine(1402) in 16S rRNA + S-adenosyl-L-homocysteine + H(+). In terms of biological role, specifically methylates the N4 position of cytidine in position 1402 (C1402) of 16S rRNA. The protein is Ribosomal RNA small subunit methyltransferase H of Aliarcobacter butzleri (strain RM4018) (Arcobacter butzleri).